The primary structure comprises 554 residues: SWRKMATAEKQKHDGRVRIGHYILGDTLGVGTFGKVKVGKHELTGHKVAVKILNRQKIRSLDVVGKIRREIQNLKLFRHPHIIKLYQVISTPSDIFMVMEYVSGGELFDYICKNGRLDEKESRRLFQQILSGVDYCHRHMVVHRDLKPENVLLDAHMNAKIADFGLSNMMSDGEFLRTSCGSPNYAAPEVISGRLYAGPEVDIWSSGVILYALLCGTLPFDDDHVPTLFKKICDGIFYTPQYLNPSVISLLKHMLQVDPMKRATIKDIREHEWFKQDLPKYLFPEDPSYSSTMIDDEALKEVCEKFECSEEEVLSCLYNRNHQDPLAVAYHLIIDNRRIMNEAKDFYLATSPPDSFLDDHHLTRPHPERVPFLVAETPRARHTLDELNPQKSKHQGVRKAKWHLGIRSQSRPNDIMAEVCRAIKQLDYEWKVVNPYYLRVRRKNPVTSTYSKMSLQLYQVDSRTYLLDFRSIDDEITEAKSGTATPQRSGSVSNYRSCQRSDSDAEAQGKSSEVSLTSSVTSLDSSPVDLTPRPGSHTIEFFEMCANLIKILAQ.

The 253-residue stretch at 22–274 folds into the Protein kinase domain; sequence YILGDTLGVG…IKDIREHEWF (253 aa). Position 27 is a phosphothreonine (Thr-27). ATP contacts are provided by residues 28-36 and Lys-51; that span reads LGVGTFGKV. The Proton acceptor role is filled by Asp-145. At Thr-178 the chain carries Phosphothreonine; by LKB1 and CaMKK2. Residues Thr-264 and Thr-350 each carry the phosphothreonine modification. The AIS stretch occupies residues 297–376; it reads EALKEVCEKF…PERVPFLVAE (80 aa). Ser-351 is subject to Phosphoserine. Ser-355 carries the post-translational modification Phosphoserine; by ULK1. Thr-363 carries the phosphothreonine; by ULK1 modification. Thr-377 is subject to Phosphothreonine. A Phosphoserine; by ULK1 modification is found at Ser-392. At Ser-462 the chain carries Phosphoserine. Over residues 480 to 500 the composition is skewed to polar residues; that stretch reads KSGTATPQRSGSVSNYRSCQR. The segment at 480–531 is disordered; it reads KSGTATPQRSGSVSNYRSCQRSDSDAEAQGKSSEVSLTSSVTSLDSSPVDLT. Ser-481 bears the Phosphoserine; by ULK1 mark. Phosphothreonine; by ULK1 is present on Thr-483. A Phosphothreonine modification is found at Thr-485. A phosphoserine mark is found at Ser-491, Ser-503, Ser-519, and Ser-522. Over residues 511–530 the composition is skewed to low complexity; the sequence is SSEVSLTSSVTSLDSSPVDL.

The protein belongs to the protein kinase superfamily. CAMK Ser/Thr protein kinase family. SNF1 subfamily. In terms of assembly, AMPK is a heterotrimer of an alpha catalytic subunit (PRKAA1 or PRKAA2), a beta (PRKAB1 or PRKAB2) and a gamma non-catalytic subunits (PRKAG1, PRKAG2 or PRKAG3). Interacts with FNIP1 and FNIP2. Mg(2+) serves as cofactor. Post-translationally, ubiquitinated. Phosphorylated at Thr-183 by STK11/LKB1 in complex with STE20-related adapter-alpha (STRADA) pseudo kinase and CAB39. Also phosphorylated at Thr-183 by CAMKK2; triggered by a rise in intracellular calcium ions, without detectable changes in the AMP/ATP ratio. CAMKK1 can also phosphorylate Thr-183, but at a much lower level. Dephosphorylated by protein phosphatase 2A and 2C (PP2A and PP2C). Phosphorylated by ULK1 and ULK2; leading to negatively regulate AMPK activity and suggesting the existence of a regulatory feedback loop between ULK1, ULK2 and AMPK. Dephosphorylated by PPM1A and PPM1B. In terms of processing, glycosylated; O-GlcNAcylated by OGT, promoting the AMP-activated protein kinase (AMPK) activity.

Its subcellular location is the cytoplasm. The protein localises to the nucleus. The catalysed reaction is L-seryl-[protein] + ATP = O-phospho-L-seryl-[protein] + ADP + H(+). The enzyme catalyses L-threonyl-[protein] + ATP = O-phospho-L-threonyl-[protein] + ADP + H(+). It catalyses the reaction L-seryl-[acetyl-CoA carboxylase] + ATP = O-phospho-L-seryl-[acetyl-CoA carboxylase] + ADP + H(+). It carries out the reaction L-seryl-[3-hydroxy-3-methylglutaryl-coenzyme A reductase] + ATP = O-phospho-L-seryl-[3-hydroxy-3-methylglutaryl-coenzyme A reductase] + ADP + H(+). The catalysed reaction is L-seryl-[tau protein] + ATP = O-phospho-L-seryl-[tau protein] + ADP + H(+). The enzyme catalyses L-threonyl-[tau protein] + ATP = O-phospho-L-threonyl-[tau protein] + ADP + H(+). With respect to regulation, activated by phosphorylation on Thr-183. Binding of AMP to non-catalytic gamma subunit (PRKAG1, PRKAG2 or PRKAG3) results in allosteric activation, inducing phosphorylation on Thr-183. AMP-binding to gamma subunit also sustains activity by preventing dephosphorylation of Thr-183. ADP also stimulates Thr-183 phosphorylation, without stimulating already phosphorylated AMPK. ATP promotes dephosphorylation of Thr-183, rendering the enzyme inactive. Under physiological conditions AMPK mainly exists in its inactive form in complex with ATP, which is much more abundant than AMP. Selectively inhibited by compound C (6-[4-(2-Piperidin-1-yl-ethoxy)-phenyl)]-3-pyridin-4-yl-pyyrazolo[1,5-a] pyrimidine. Activated by resveratrol, a natural polyphenol present in red wine, and S17834, a synthetic polyphenol. Its function is as follows. Catalytic subunit of AMP-activated protein kinase (AMPK), an energy sensor protein kinase that plays a key role in regulating cellular energy metabolism. In response to reduction of intracellular ATP levels, AMPK activates energy-producing pathways and inhibits energy-consuming processes: inhibits protein, carbohydrate and lipid biosynthesis, as well as cell growth and proliferation. AMPK acts via direct phosphorylation of metabolic enzymes, and by longer-term effects via phosphorylation of transcription regulators. Regulates lipid synthesis by phosphorylating and inactivating lipid metabolic enzymes such as ACACA, ACACB, GYS1, HMGCR and LIPE; regulates fatty acid and cholesterol synthesis by phosphorylating acetyl-CoA carboxylase (ACACA and ACACB) and hormone-sensitive lipase (LIPE) enzymes, respectively. Promotes lipolysis of lipid droplets by mediating phosphorylation of isoform 1 of CHKA (CHKalpha2). Regulates insulin-signaling and glycolysis by phosphorylating IRS1, PFKFB2 and PFKFB3. AMPK stimulates glucose uptake in muscle by increasing the translocation of the glucose transporter SLC2A4/GLUT4 to the plasma membrane, possibly by mediating phosphorylation of TBC1D4/AS160. Regulates transcription and chromatin structure by phosphorylating transcription regulators involved in energy metabolism such as CRTC2/TORC2, FOXO3, histone H2B, HDAC5, MEF2C, MLXIPL/ChREBP, EP300, HNF4A, p53/TP53, SREBF1, SREBF2 and PPARGC1A. Acts as a key regulator of glucose homeostasis in liver by phosphorylating CRTC2/TORC2, leading to CRTC2/TORC2 sequestration in the cytoplasm. In response to stress, phosphorylates 'Ser-36' of histone H2B (H2BS36ph), leading to promote transcription. Acts as a key regulator of cell growth and proliferation by phosphorylating FNIP1, TSC2, RPTOR, WDR24 and ATG1/ULK1: in response to nutrient limitation, negatively regulates the mTORC1 complex by phosphorylating RPTOR component of the mTORC1 complex and by phosphorylating and activating TSC2. Also phosphorylates and inhibits GATOR2 subunit WDR24 in response to nutrient limitation, leading to suppress glucose-mediated mTORC1 activation. In response to energetic stress, phosphorylates FNIP1, inactivating the non-canonical mTORC1 signaling, thereby promoting nuclear translocation of TFEB and TFE3, and inducing transcription of lysosomal or autophagy genes. In response to nutrient limitation, promotes autophagy by phosphorylating and activating ATG1/ULK1. In that process also activates WDR45/WIPI4. Phosphorylates CASP6, thereby preventing its autoprocessing and subsequent activation. In response to nutrient limitation, phosphorylates transcription factor FOXO3 promoting FOXO3 mitochondrial import. Also acts as a regulator of cellular polarity by remodeling the actin cytoskeleton; probably by indirectly activating myosin. AMPK also acts as a regulator of circadian rhythm by mediating phosphorylation of CRY1, leading to destabilize it. May regulate the Wnt signaling pathway by phosphorylating CTNNB1, leading to stabilize it. Also has tau-protein kinase activity: in response to amyloid beta A4 protein (APP) exposure, activated by CAMKK2, leading to phosphorylation of MAPT/TAU; however the relevance of such data remains unclear in vivo. Also phosphorylates CFTR, EEF2K, KLC1, NOS3 and SLC12A1. Regulates hepatic lipogenesis. Activated via SIRT3, represses sterol regulatory element-binding protein (SREBP) transcriptional activities and ATP-consuming lipogenesis to restore cellular energy balance. Upon stress, regulates mitochondrial fragmentation through phosphorylation of MTFR1L. The polypeptide is 5'-AMP-activated protein kinase catalytic subunit alpha-1 (PRKAA1) (Pongo abelii (Sumatran orangutan)).